Consider the following 339-residue polypeptide: MIRKIYDKLVESHNEIKNQIYNIANYLKQEIQDKVNEYWNEYVINHEQSETCKFVAIDGGSFGRPMRIGIVYAVGAESVIGDNKGVKTLSEDGQIGIFKPGNDAQERISLLMEALELSLALRDGSKGDYILMDGSLSKKIGNKVDIQQFSDEELKLIRNVDLNGIISIKDERKMRDLLMLLNQFLVSKIIEEYDGNVLWISKVSRGRDLFGTDYPDITVLELFTEKRGFSKLIIKNIDIEKISEIPEIEVLRKMEYTTFYTRLDNGKRVIRVDIVGRVDEKIVKEIMDRLSGVSIKGYPFPLLKAHMDVRFSAMDREKIIKLVGSKLHKDIEWWPSQFY.

Residues Asp-58 and Asp-133 each coordinate Mn(2+).

It belongs to the NurA family. Homodimer. Forms a complex with HerA. It depends on Mn(2+) as a cofactor.

Its activity is regulated as follows. Nuclease activity requires the presence of HerA. Another report shows endo- and exonuclease activity in the absence of HerA; HerA stimulates the exo- but not endonuclease. LhrC-Core (Hel112) inhibits the exonuclease activity of the HerA-NurA complex on ss- and dsDNA, has no effect on the nicking activity of NurA. Endo- and exonuclease activities are inhibited by ATP; ATP may subtract divalent ions from the reaction preventing nuclease activity, HerA can alleviate ATP inhibition. In terms of biological role, involved in DNA double-strand break (DSB) repair. Probably acts with HerA to stimulate resection of the 5' strand and produce the long 3' single-strand that is required for RadA loading. NurA and HerA together stimulate the end-resection of six nucleotides of a linear DNA substrate. Processes linear double-stranded (ds)DNA probes with 3' or 5' single-stranded overhangs or blunt ends. Has endonuclease activity on single-stranded (ss)DNA and nicking activity on dsDNA without HerA as well as 5'- and 3'-exonuclease activity on ssDNA. Binds ssDNA, dsDNA, forked and bubble DNA equally well. In Saccharolobus solfataricus (strain ATCC 35092 / DSM 1617 / JCM 11322 / P2) (Sulfolobus solfataricus), this protein is DNA double-strand break repair nuclease NurA.